A 425-amino-acid chain; its full sequence is Beta-1,4-galactosyltransferase galt-1 (425 aa).

At 1–8 the chain is on the cytoplasmic side; the sequence is MPRITASK. Residues 9 to 29 traverse the membrane as a helical; Signal-anchor for type II membrane protein segment; sequence IVLLIALSFCITVIYHFPIAT. The Lumenal segment spans residues 30 to 425; sequence RSSKEYDEYG…FDSVVGLLDL (396 aa). N-linked (GlcNAc...) asparagine glycans are attached at residues Asn-109 and Asn-152. The region spanning 189 to 394 is the GT92 domain; sequence KMSICVPALF…LLRVYHYKDK (206 aa).

It belongs to the glycosyltransferase 92 family. Mn(2+) is required as a cofactor. N-glycosylated. As to expression, expressed in intestine and coelomocytes.

The protein resides in the golgi apparatus. It localises to the golgi stack membrane. With respect to regulation, inhibited by EDTA, Cu(2+) and Zn(2+). Catalyzes the transfer of beta-galactose from UDP-galactose to position 4 of alpha-1,6-linked fucose at the reducing end GlcNAc in N-glycan cores. Involved in susceptibility to the nematotoxic C.cinerea galectin Cgl2, likely by contributing to the synthesis of core alpha-1,6-fucosylated N-glycans to which Cgl2 binds. This is Beta-1,4-galactosyltransferase galt-1 from Caenorhabditis elegans.